Here is an 824-residue protein sequence, read N- to C-terminus: LPS-assembly protein LptD (824 aa).

2 disordered regions span residues 1–26 and 67–117; these read MTEQ…RRVR and TQTP…PAYV. The N-terminal stretch at 1 to 48 is a signal peptide; the sequence is MTEQRRSPHHPATRPPAPPGTSRRVRLPASALRPLVLAMAGLTVSAHA. Over residues 98-115 the composition is skewed to low complexity; the sequence is NTLNLSPSSTPSNPNAPA.

This sequence belongs to the LptD family. As to quaternary structure, component of the lipopolysaccharide transport and assembly complex. Interacts with LptE and LptA.

Its subcellular location is the cell outer membrane. Its function is as follows. Together with LptE, is involved in the assembly of lipopolysaccharide (LPS) at the surface of the outer membrane. The chain is LPS-assembly protein LptD from Cupriavidus metallidurans (strain ATCC 43123 / DSM 2839 / NBRC 102507 / CH34) (Ralstonia metallidurans).